We begin with the raw amino-acid sequence, 154 residues long: Superoxide dismutase [Cu-Zn] (154 aa).

3 residues coordinate Cu cation: H47, H49, and H64. Residues C58 and C147 are joined by a disulfide bond. Zn(2+) contacts are provided by H64, H72, H81, and D84. H121 contacts Cu cation. Position 144 (R144) interacts with substrate.

It belongs to the Cu-Zn superoxide dismutase family. As to quaternary structure, homodimer. Cu cation serves as cofactor. It depends on Zn(2+) as a cofactor.

It is found in the cytoplasm. It carries out the reaction 2 superoxide + 2 H(+) = H2O2 + O2. Functionally, destroys radicals which are normally produced within the cells and which are toxic to biological systems. The chain is Superoxide dismutase [Cu-Zn] (SOD1) from Eremothecium gossypii (strain ATCC 10895 / CBS 109.51 / FGSC 9923 / NRRL Y-1056) (Yeast).